The chain runs to 623 residues: Kelch repeat and BTB domain-containing protein 12 (623 aa).

The BTB domain occupies T25–A92. The 110-residue stretch at C127–K236 folds into the BACK domain. Kelch repeat units lie at residues N390–G440, R441–G496, I498–A551, and K557–N607.

The sequence is that of Kelch repeat and BTB domain-containing protein 12 (kbtbd12) from Danio rerio (Zebrafish).